The sequence spans 251 residues: Hydroxyacylglutathione hydrolase (251 aa).

Zn(2+) is bound by residues H53, H55, D57, H58, H110, D127, and H165.

This sequence belongs to the metallo-beta-lactamase superfamily. Glyoxalase II family. In terms of assembly, monomer. Zn(2+) serves as cofactor.

The catalysed reaction is an S-(2-hydroxyacyl)glutathione + H2O = a 2-hydroxy carboxylate + glutathione + H(+). It functions in the pathway secondary metabolite metabolism; methylglyoxal degradation; (R)-lactate from methylglyoxal: step 2/2. Its function is as follows. Thiolesterase that catalyzes the hydrolysis of S-D-lactoyl-glutathione to form glutathione and D-lactic acid. In Salmonella dublin (strain CT_02021853), this protein is Hydroxyacylglutathione hydrolase.